Reading from the N-terminus, the 295-residue chain is MSKDIATPGRTTEILKKYGFLFKKSLGQNFLIDSNILTRITDTAEITKETNVIEIGPGIGALTEQLAKTANEVVAFEIDQRLLPILDDTLSAYNNIQVVHGDVLKADVEEVIAEQFAKPDLPLKIVANLPYYVTTPIILKLLHDNIPADSMTFMLQKEVADRISAVPSTKSYGSLTIAIQFYMEAELAFIVPKTVFMPQPNVDSAVIHLKRRKEPLAEVNDEEFFFEVTRASFAQRRKTLWNNLASKFPALKPRKDELVEGLNAIGIDLIRRGETLDIPEFAKLSNFLGDFLKEK.

Residues Asn-29, Leu-31, Gly-56, Glu-77, Asp-102, and Asn-128 each coordinate S-adenosyl-L-methionine.

Belongs to the class I-like SAM-binding methyltransferase superfamily. rRNA adenine N(6)-methyltransferase family. RsmA subfamily.

It localises to the cytoplasm. The enzyme catalyses adenosine(1518)/adenosine(1519) in 16S rRNA + 4 S-adenosyl-L-methionine = N(6)-dimethyladenosine(1518)/N(6)-dimethyladenosine(1519) in 16S rRNA + 4 S-adenosyl-L-homocysteine + 4 H(+). Its function is as follows. Specifically dimethylates two adjacent adenosines (A1518 and A1519) in the loop of a conserved hairpin near the 3'-end of 16S rRNA in the 30S particle. May play a critical role in biogenesis of 30S subunits. The chain is Ribosomal RNA small subunit methyltransferase A from Listeria monocytogenes serotype 4b (strain CLIP80459).